The primary structure comprises 138 residues: Putative pre-16S rRNA nuclease (138 aa).

This sequence belongs to the YqgF nuclease family.

It is found in the cytoplasm. Functionally, could be a nuclease involved in processing of the 5'-end of pre-16S rRNA. This chain is Putative pre-16S rRNA nuclease, found in Bacteroides thetaiotaomicron (strain ATCC 29148 / DSM 2079 / JCM 5827 / CCUG 10774 / NCTC 10582 / VPI-5482 / E50).